A 151-amino-acid chain; its full sequence is UPF0178 protein Sde_3033 (151 aa).

The protein belongs to the UPF0178 family.

This Saccharophagus degradans (strain 2-40 / ATCC 43961 / DSM 17024) protein is UPF0178 protein Sde_3033.